The primary structure comprises 577 residues: Arginine--tRNA ligase (577 aa).

Residues 122–132 carry the 'HIGH' region motif; it reads PNVAKEMHVGH.

Belongs to the class-I aminoacyl-tRNA synthetase family. Monomer.

The protein localises to the cytoplasm. It carries out the reaction tRNA(Arg) + L-arginine + ATP = L-arginyl-tRNA(Arg) + AMP + diphosphate. The polypeptide is Arginine--tRNA ligase (Escherichia coli O1:K1 / APEC).